Consider the following 101-residue polypeptide: Small ribosomal subunit protein uS14 (101 aa).

This sequence belongs to the universal ribosomal protein uS14 family. In terms of assembly, part of the 30S ribosomal subunit. Contacts proteins S3 and S10.

Functionally, binds 16S rRNA, required for the assembly of 30S particles and may also be responsible for determining the conformation of the 16S rRNA at the A site. In Dechloromonas aromatica (strain RCB), this protein is Small ribosomal subunit protein uS14.